Here is a 27-residue protein sequence, read N- to C-terminus: Cupiennin-3d (27 aa).

Glu-27 bears the Glutamic acid 1-amide mark.

In terms of tissue distribution, expressed by the venom gland.

It localises to the secreted. The polypeptide is Cupiennin-3d (Cupiennius salei (American wandering spider)).